A 606-amino-acid chain; its full sequence is Methionine--tRNA ligase (606 aa).

A 'HIGH' region motif is present at residues 14 to 24; the sequence is PYANGPRHIGH. The Zn(2+) site is built by C146, C149, C159, and C162. Positions 351–355 match the 'KMSKS' region motif; sequence KFSSS. S354 contacts ATP.

This sequence belongs to the class-I aminoacyl-tRNA synthetase family. MetG type 1 subfamily. As to quaternary structure, monomer. Requires Zn(2+) as cofactor.

Its subcellular location is the cytoplasm. It carries out the reaction tRNA(Met) + L-methionine + ATP = L-methionyl-tRNA(Met) + AMP + diphosphate. Its function is as follows. Is required not only for elongation of protein synthesis but also for the initiation of all mRNA translation through initiator tRNA(fMet) aminoacylation. In Thermobifida fusca (strain YX), this protein is Methionine--tRNA ligase.